Reading from the N-terminus, the 432-residue chain is Glutamate-1-semialdehyde 2,1-aminomutase (432 aa).

N6-(pyridoxal phosphate)lysine is present on Lys265.

Belongs to the class-III pyridoxal-phosphate-dependent aminotransferase family. HemL subfamily. Homodimer. It depends on pyridoxal 5'-phosphate as a cofactor.

It localises to the cytoplasm. It carries out the reaction (S)-4-amino-5-oxopentanoate = 5-aminolevulinate. The protein operates within porphyrin-containing compound metabolism; protoporphyrin-IX biosynthesis; 5-aminolevulinate from L-glutamyl-tRNA(Glu): step 2/2. In Histophilus somni (strain 129Pt) (Haemophilus somnus), this protein is Glutamate-1-semialdehyde 2,1-aminomutase.